An 85-amino-acid chain; its full sequence is Large ribosomal subunit protein bL27 (85 aa).

The tract at residues 1–20 (MAHKKGGGTTRNGRDSESKR) is disordered.

It belongs to the bacterial ribosomal protein bL27 family.

The sequence is that of Large ribosomal subunit protein bL27 from Herminiimonas arsenicoxydans.